Reading from the N-terminus, the 86-residue chain is Anti-adapter protein IraP (86 aa).

Positions 1–36 (MKNLIAELLLKLAQKEEESKELCAQVEALEIIVTAM) form a coiled coil.

The protein belongs to the IraP family. As to quaternary structure, interacts with RssB.

It localises to the cytoplasm. Functionally, inhibits RpoS proteolysis by regulating RssB activity, thereby increasing the stability of the sigma stress factor RpoS especially during phosphate starvation, but also in stationary phase and during nitrogen starvation. Its effect on RpoS stability is due to its interaction with RssB, which probably blocks the interaction of RssB with RpoS, and the consequent delivery of the RssB-RpoS complex to the ClpXP protein degradation pathway. This chain is Anti-adapter protein IraP, found in Shigella boydii serotype 18 (strain CDC 3083-94 / BS512).